We begin with the raw amino-acid sequence, 287 residues long: Protease HtpX (287 aa).

2 consecutive transmembrane segments (helical) span residues Ile4 to Ile24 and Gly33 to Ile53. His139 lines the Zn(2+) pocket. Residue Glu140 is part of the active site. Zn(2+) is bound at residue His143. 2 helical membrane passes run Leu154–Ile174 and Ala195–Phe215. Residue Glu220 coordinates Zn(2+).

This sequence belongs to the peptidase M48B family. Requires Zn(2+) as cofactor.

The protein localises to the cell inner membrane. This Shewanella baltica (strain OS185) protein is Protease HtpX.